The chain runs to 381 residues: uncharacterized protein (381 aa).

Helical transmembrane passes span Gly-22 to Ala-42 and Leu-246 to Ala-266.

It localises to the cell membrane. This is an uncharacterized protein from Mycobacterium tuberculosis (strain ATCC 25618 / H37Rv).